The following is a 412-amino-acid chain: Sulfhydrogenase 2 subunit alpha (412 aa).

Ni(2+) is bound by residues cysteine 60, cysteine 63, cysteine 402, and cysteine 405. Residue cysteine 63 coordinates Fe cation. Fe cation is bound at residue cysteine 405.

This sequence belongs to the [NiFe]/[NiFeSe] hydrogenase large subunit family. Dimer of heterotetramer of alpha, beta, gamma and delta subunits. The nickel-containing alpha and delta subunits constitute the hydrogenase activity. The beta and gamma subunits (flavin-containing dimer) constitute the sulfur reductase activity. The cofactor is Ni(2+). Fe cation is required as a cofactor.

The protein resides in the cytoplasm. The enzyme catalyses H2 + NADP(+) = NADPH + H(+). The catalysed reaction is H2 + NAD(+) = NADH + H(+). In terms of biological role, part of a bifunctional enzyme complex that functions as a hydrogen-evolving hydrogenase with sulfur-reducing activity. May play a role in hydrogen cycling during fermentative growth. Activity exhibited with NAD in addition to NADPH. The alpha and delta subunits form the hydrogenase component that catalyzes the reduction of protons to evolve hydrogen. This chain is Sulfhydrogenase 2 subunit alpha, found in Pyrococcus furiosus (strain ATCC 43587 / DSM 3638 / JCM 8422 / Vc1).